The following is a 156-amino-acid chain: MKLQLIAVGTRMPDWVTRGFEEYQRRFPRDMALELIEIPAGKRGKNADIVRILQKEGEQMLAAIPKGNHIVTLDLPGKNWTTPELATAMNKWQLDGRDVSLLVGGPEGLAPACKEAAHQSWCLSALTLPHPLVRIVVAESLYRAWSVNNNHPYHRE.

S-adenosyl-L-methionine is bound by residues L73, G104, and 123–128 (LSALTL).

Belongs to the RNA methyltransferase RlmH family. In terms of assembly, homodimer.

The protein localises to the cytoplasm. It catalyses the reaction pseudouridine(1915) in 23S rRNA + S-adenosyl-L-methionine = N(3)-methylpseudouridine(1915) in 23S rRNA + S-adenosyl-L-homocysteine + H(+). Functionally, specifically methylates the pseudouridine at position 1915 (m3Psi1915) in 23S rRNA. The polypeptide is Ribosomal RNA large subunit methyltransferase H (Shewanella sp. (strain MR-7)).